The chain runs to 178 residues: Large ribosomal subunit protein uL6 (178 aa).

It belongs to the universal ribosomal protein uL6 family. In terms of assembly, part of the 50S ribosomal subunit.

Functionally, this protein binds to the 23S rRNA, and is important in its secondary structure. It is located near the subunit interface in the base of the L7/L12 stalk, and near the tRNA binding site of the peptidyltransferase center. The protein is Large ribosomal subunit protein uL6 of Lactococcus lactis subsp. cremoris (strain MG1363).